Here is a 137-residue protein sequence, read N- to C-terminus: Structural protein A137R (137 aa).

It belongs to the asfivirus A137R family. As to quaternary structure, interacts with host TBK1.

It is found in the virion. The protein resides in the host cytoplasm. In terms of biological role, plays a role in the inhibition of the host innate immune response. Mechanistically, promotes the autophagy-mediated lysosomal degradation of host TBK1 and affects IRF3 nuclear translocation to block type I IFN production. The polypeptide is Structural protein A137R (African swine fever virus (isolate Warthog/Namibia/Wart80/1980) (ASFV)).